A 454-amino-acid chain; its full sequence is Transcription factor bHLH123 (454 aa).

The segment covering 101–113 has biased composition (low complexity); the sequence is SNANANTTSSTSS. Disordered regions lie at residues 101–127, 185–228, 270–348, and 398–417; these read SNAN…HHQA, ATTT…QFGS, AAAG…KRKE, and GASL…VSEE. Polar residues-rich tracts occupy residues 185–195 and 207–228; these read ATTTTPNSSSG and SSDQ…QFGS. Residues 303–324 show a composition bias toward basic and acidic residues; it reads EQPKNISEIRDSSSNEVKRGGN. Positions 334–383 constitute a bHLH domain; it reads KSEAASPSPAFKRKEKMGDRIAALQQLVSPFGKTDAASVLSEAIEYIKFL.

In terms of assembly, homodimer.

It is found in the nucleus. The sequence is that of Transcription factor bHLH123 (BHLH123) from Arabidopsis thaliana (Mouse-ear cress).